We begin with the raw amino-acid sequence, 379 residues long: Homoserine O-acetyltransferase (379 aa).

In terms of domain architecture, AB hydrolase-1 spans 52–356 (NVVMVLHALT…IRGHDGFLVE (305 aa)). Catalysis depends on Ser-157, which acts as the Nucleophile. Substrate is bound at residue Arg-227. Residues Asp-320 and His-350 contribute to the active site. Substrate is bound at residue Asp-351.

Belongs to the AB hydrolase superfamily. MetX family. Homodimer.

It localises to the cytoplasm. The catalysed reaction is L-homoserine + acetyl-CoA = O-acetyl-L-homoserine + CoA. It functions in the pathway amino-acid biosynthesis; L-methionine biosynthesis via de novo pathway; O-acetyl-L-homoserine from L-homoserine: step 1/1. In terms of biological role, transfers an acetyl group from acetyl-CoA to L-homoserine, forming acetyl-L-homoserine. In Mycobacterium marinum (strain ATCC BAA-535 / M), this protein is Homoserine O-acetyltransferase.